A 405-amino-acid polypeptide reads, in one-letter code: uncharacterized protein (405 aa).

13 helical membrane-spanning segments follow: residues 19–39, 48–68, 85–105, 106–126, 129–149, 156–176, 178–198, 224–244, 252–272, 283–303, 309–329, 344–364, and 366–386; these read IVSI…PLAV, MGFS…ATLL, IVVF…LADI, ASAW…ILGI, SFAG…LHIG, GIVT…CYAW, GLQG…LLAL, GMAL…ITLF, GAAF…LLFP, VAMI…TAAM, IGVL…GVVA, TYTV…GLVM, and WAGV…ALLL.

This sequence belongs to the major facilitator superfamily. YhhS family.

The protein resides in the cell inner membrane. This is an uncharacterized protein from Salmonella paratyphi C (strain RKS4594).